Reading from the N-terminus, the 186-residue chain is ATP synthase subunit b (186 aa).

The helical transmembrane segment at 5–25 (LILNLLVLLAPAAVFAAGGGH) threads the bilayer.

This sequence belongs to the ATPase B chain family. In terms of assembly, F-type ATPases have 2 components, F(1) - the catalytic core - and F(0) - the membrane proton channel. F(1) has five subunits: alpha(3), beta(3), gamma(1), delta(1), epsilon(1). F(0) has three main subunits: a(1), b(2) and c(10-14). The alpha and beta chains form an alternating ring which encloses part of the gamma chain. F(1) is attached to F(0) by a central stalk formed by the gamma and epsilon chains, while a peripheral stalk is formed by the delta and b chains.

It localises to the cell inner membrane. Its function is as follows. F(1)F(0) ATP synthase produces ATP from ADP in the presence of a proton or sodium gradient. F-type ATPases consist of two structural domains, F(1) containing the extramembraneous catalytic core and F(0) containing the membrane proton channel, linked together by a central stalk and a peripheral stalk. During catalysis, ATP synthesis in the catalytic domain of F(1) is coupled via a rotary mechanism of the central stalk subunits to proton translocation. Functionally, component of the F(0) channel, it forms part of the peripheral stalk, linking F(1) to F(0). The polypeptide is ATP synthase subunit b (Bdellovibrio bacteriovorus (strain ATCC 15356 / DSM 50701 / NCIMB 9529 / HD100)).